The following is a 118-amino-acid chain: Small ribosomal subunit protein uS13 (118 aa).

Residues serine 94–lysine 118 form a disordered region.

Belongs to the universal ribosomal protein uS13 family. As to quaternary structure, part of the 30S ribosomal subunit. Forms a loose heterodimer with protein S19. Forms two bridges to the 50S subunit in the 70S ribosome.

Its function is as follows. Located at the top of the head of the 30S subunit, it contacts several helices of the 16S rRNA. In the 70S ribosome it contacts the 23S rRNA (bridge B1a) and protein L5 of the 50S subunit (bridge B1b), connecting the 2 subunits; these bridges are implicated in subunit movement. Contacts the tRNAs in the A and P-sites. The protein is Small ribosomal subunit protein uS13 of Vibrio parahaemolyticus serotype O3:K6 (strain RIMD 2210633).